The sequence spans 863 residues: Valine--tRNA ligase (863 aa).

A 'HIGH' region motif is present at residues 43-53 (PYPTGSFHIGH). Positions 517 to 521 (KMSKS) match the 'KMSKS' region motif. An ATP-binding site is contributed by Lys520.

The protein belongs to the class-I aminoacyl-tRNA synthetase family. ValS type 2 subfamily.

Its subcellular location is the cytoplasm. It carries out the reaction tRNA(Val) + L-valine + ATP = L-valyl-tRNA(Val) + AMP + diphosphate. In terms of biological role, catalyzes the attachment of valine to tRNA(Val). As ValRS can inadvertently accommodate and process structurally similar amino acids such as threonine, to avoid such errors, it has a 'posttransfer' editing activity that hydrolyzes mischarged Thr-tRNA(Val) in a tRNA-dependent manner. The protein is Valine--tRNA ligase of Archaeoglobus fulgidus (strain ATCC 49558 / DSM 4304 / JCM 9628 / NBRC 100126 / VC-16).